The following is a 280-amino-acid chain: Ribosomal RNA-processing protein 7 homolog A (280 aa).

The segment covering 1-10 (MVSRRKKRKA) has biased composition (basic residues). A disordered region spans residues 1-24 (MVSRRKKRKAGGHEESIPSPPGYS). The RRM domain occupies 59-159 (RTLFILNVPP…SGIHKWISDY (101 aa)). A Phosphoserine modification is found at Ser-99.

The protein belongs to the RRP7 family. In terms of assembly, part of the small subunit (SSU) processome, composed of more than 70 proteins and the RNA chaperone small nucleolar RNA (snoRNA) U3. Interacts with NOL6; required for NOL6 localization to nucleolus.

It localises to the nucleus. It is found in the nucleolus. The protein localises to the cell projection. Its subcellular location is the cilium. The protein resides in the cytoplasm. It localises to the cytoskeleton. It is found in the microtubule organizing center. The protein localises to the centrosome. In terms of biological role, nucleolar protein that is involved in ribosomal RNA (rRNA) processing. Also plays a role in primary cilia resorption, and cell cycle progression in neurogenesis and neocortex development. Part of the small subunit (SSU) processome, first precursor of the small eukaryotic ribosomal subunit. During the assembly of the SSU processome in the nucleolus, many ribosome biogenesis factors, an RNA chaperone and ribosomal proteins associate with the nascent pre-rRNA and work in concert to generate RNA folding, modifications, rearrangements and cleavage as well as targeted degradation of pre-ribosomal RNA by the RNA exosome. The sequence is that of Ribosomal RNA-processing protein 7 homolog A (Rrp7a) from Mus musculus (Mouse).